A 200-amino-acid polypeptide reads, in one-letter code: Dephospho-CoA kinase (200 aa).

The DPCK domain occupies 4-200 (VIGLTGGIAS…VILKKWNIID (197 aa)). 12 to 17 (ASGKST) is a binding site for ATP.

The protein belongs to the CoaE family.

It localises to the cytoplasm. The catalysed reaction is 3'-dephospho-CoA + ATP = ADP + CoA + H(+). Its pathway is cofactor biosynthesis; coenzyme A biosynthesis; CoA from (R)-pantothenate: step 5/5. In terms of biological role, catalyzes the phosphorylation of the 3'-hydroxyl group of dephosphocoenzyme A to form coenzyme A. The sequence is that of Dephospho-CoA kinase from Bacillus cereus (strain ATCC 14579 / DSM 31 / CCUG 7414 / JCM 2152 / NBRC 15305 / NCIMB 9373 / NCTC 2599 / NRRL B-3711).